The primary structure comprises 314 residues: DegV domain-containing protein XCC3382 (314 aa).

The DegV domain occupies 3–307 (IGIVVDSACD…KGALAVAFAA (305 aa)). The hexadecanoate site is built by T63 and S96.

In terms of biological role, may bind long-chain fatty acids, such as palmitate, and may play a role in lipid transport or fatty acid metabolism. The polypeptide is DegV domain-containing protein XCC3382 (Xanthomonas campestris pv. campestris (strain ATCC 33913 / DSM 3586 / NCPPB 528 / LMG 568 / P 25)).